Consider the following 434-residue polypeptide: Eukaryotic translation initiation factor 3 subunit E (434 aa).

The PCI domain maps to 219-392; it reads FFNHPKGRDL…GHVVMGTQPL (174 aa).

This sequence belongs to the eIF-3 subunit E family. Component of the eukaryotic translation initiation factor 3 (eIF-3) complex. The eIF-3 complex interacts with pix. Interacts with mxt.

It localises to the cytoplasm. Component of the eukaryotic translation initiation factor 3 (eIF-3) complex, which is involved in protein synthesis of a specialized repertoire of mRNAs and, together with other initiation factors, stimulates binding of mRNA and methionyl-tRNAi to the 40S ribosome. The eIF-3 complex specifically targets and initiates translation of a subset of mRNAs involved in cell proliferation. In Drosophila virilis (Fruit fly), this protein is Eukaryotic translation initiation factor 3 subunit E (eIF3-S6).